Reading from the N-terminus, the 561-residue chain is MARNMNILTLFAVLIGSASAVYHPPSWTAWIAPKPWTAWKVHPPAWTAWKAHPPAWTAWKATPKPWTAWKAPPPAWTAWKATPKPWTAWKAPPPTWTAWKATPKPWTAWKAPPPAWTAWKATLKPWTAWKATPKPWTAWKATPKPWTAWKATPKPWTAWKATPKPWTAWKATPKPWTVWKATPKPWTAWKATPKPWTAWKAPPPAWSAWKATPKPWTVWKATPKPWTAWKATPKPWTAWKATPKPWTVWKATPKPWTAWKAPPPAWTAWKATPKPWTAWKAPPPTWTAWKATPKPWTAWKAPPPAWSAWKATPKPWTAWKATPKPWTAWKATPKPWTAWKATPKPWTAWKVPPPAWTAWKAHPPAWTAWKATPKPWTAWKAPPPAWTAWKATPKPWTAWKAPPPAWTAWKATPKPWTAWKATPKPWTVWKATPKPWTAWRATPPPTWTAWHGHGYGGYGKPGKPGKPGSKGPRGPAGPPGATGKTGRTGATGKRGPPGYPGKPGVPGRNGYVHIVFDGYGKWEIGKIERKNIREAVAKAWTAWNAGHGHGWTAWTAPPAYG.

Positions Met1–Ala20 are cleaved as a signal peptide. Tyr22 is modified (3',4'-dihydroxyphenylalanine). Pro33 carries the post-translational modification 4-hydroxyproline. One copy of the A-1; approximate repeat lies at Val41–Lys50. The segment at Val41–Lys410 is 13 X 10 AA A-P-P-P-A-W-T-A-W-K. 4 positions are modified to 7'-hydroxytryptophan: Trp46, Trp49, Trp56, and Trp59. Trp46, Trp49, Trp56, and Trp59 each carry a C-linked (Man) hydroxytryptophan glycan. One copy of the A-2; approximate repeat lies at Ala51 to Lys60. The B-1 repeat unit spans residues Ala61 to Lys70. Positions Ala61 to Arg440 are 27 X 10 AA A-T-P-K-P-W-T-A-W-K. Position 65 is a 4-hydroxyproline (Pro65). C-linked (Man) tryptophan glycosylation is present at Trp66. The residue at position 69 (Trp69) is a 7'-hydroxytryptophan. Trp69 carries a C-linked (Man) hydroxytryptophan glycan. One copy of the A-3 repeat lies at Ala71–Lys80. Pro72, Pro73, and Pro74 each carry 4-hydroxyproline. 2 positions are modified to 7'-hydroxytryptophan: Trp76 and Trp79. Residues Trp76 and Trp79 are each glycosylated (C-linked (Man) hydroxytryptophan). A B-2 repeat occupies Ala81–Lys90. Pro85 is subject to 4-hydroxyproline. A C-linked (Man) tryptophan glycan is attached at Trp86. A 7'-hydroxytryptophan modification is found at Trp89. Trp89 is a glycosylation site (C-linked (Man) hydroxytryptophan). The A-4; approximate repeat unit spans residues Ala91–Lys100. Pro92, Pro93, and Pro94 each carry 4-hydroxyproline. 2 positions are modified to 7'-hydroxytryptophan: Trp96 and Trp99. C-linked (Man) hydroxytryptophan glycans are attached at residues Trp96 and Trp99. A B-3 repeat occupies Ala101–Lys110. Pro105 is subject to 4-hydroxyproline. Trp106 carries a C-linked (Man) tryptophan glycan. Trp109 carries the 7'-hydroxytryptophan modification. Trp109 carries C-linked (Man) hydroxytryptophan glycosylation. Residues Ala111 to Lys120 form an A-5 repeat. Pro112, Pro113, and Pro114 each carry 4-hydroxyproline. Residues Trp116 and Trp119 each carry the 7'-hydroxytryptophan modification. C-linked (Man) hydroxytryptophan glycosylation is found at Trp116 and Trp119. One copy of the B-4; approximate repeat lies at Ala121 to Lys130. Pro125 bears the 4-hydroxyproline mark. C-linked (Man) tryptophan glycosylation occurs at Trp126. Trp129 carries the 7'-hydroxytryptophan modification. Residue Trp129 is glycosylated (C-linked (Man) hydroxytryptophan). Residues Ala131–Lys140 form a B-5 repeat. Pro135 carries the 4-hydroxyproline modification. The C-linked (Man) tryptophan glycan is linked to Trp136. A 7'-hydroxytryptophan modification is found at Trp139. A glycan (C-linked (Man) hydroxytryptophan) is linked at Trp139. The stretch at Ala141–Lys150 is one B-6 repeat. 4-hydroxyproline is present on Pro145. Trp146 is a glycosylation site (C-linked (Man) tryptophan). 7'-hydroxytryptophan is present on Trp149. Residue Trp149 is glycosylated (C-linked (Man) hydroxytryptophan). Residues Ala151–Lys160 form a B-7 repeat. Residue Pro155 is modified to 4-hydroxyproline. Trp156 carries a C-linked (Man) tryptophan glycan. Trp159 carries the 7'-hydroxytryptophan modification. A C-linked (Man) hydroxytryptophan glycan is attached at Trp159. The stretch at Ala161–Lys170 is one B-8 repeat. At Pro165 the chain carries 4-hydroxyproline. A C-linked (Man) tryptophan glycan is attached at Trp166. At Trp169 the chain carries 7'-hydroxytryptophan. Residue Trp169 is glycosylated (C-linked (Man) hydroxytryptophan). A B-9; approximate repeat occupies Ala171 to Lys180. At Pro175 the chain carries 4-hydroxyproline. Trp176 carries C-linked (Man) tryptophan glycosylation. A 7'-hydroxytryptophan modification is found at Trp179. The C-linked (Man) hydroxytryptophan glycan is linked to Trp179. A B-10 repeat occupies Ala181–Lys190. 4-hydroxyproline is present on Pro185. The C-linked (Man) tryptophan glycan is linked to Trp186. Residue Trp189 is modified to 7'-hydroxytryptophan. Residue Trp189 is glycosylated (C-linked (Man) hydroxytryptophan). The stretch at Ala191 to Lys200 is one B-11 repeat. Pro195 is modified (4-hydroxyproline). Trp196 is a glycosylation site (C-linked (Man) tryptophan). Trp199 is subject to 7'-hydroxytryptophan. C-linked (Man) hydroxytryptophan glycosylation is present at Trp199. An A-6; approximate repeat occupies Ala201–Lys210. Pro202, Pro203, and Pro204 each carry 4-hydroxyproline. Trp206 and Trp209 each carry 7'-hydroxytryptophan. 2 C-linked (Man) hydroxytryptophan glycosylation sites follow: Trp206 and Trp209. One copy of the B-12; approximate repeat lies at Ala211–Lys220. At Pro215 the chain carries 4-hydroxyproline. C-linked (Man) tryptophan glycosylation is present at Trp216. At Trp219 the chain carries 7'-hydroxytryptophan. Trp219 carries a C-linked (Man) hydroxytryptophan glycan. Residues Ala221 to Lys230 form a B-13 repeat. Pro225 bears the 4-hydroxyproline mark. Trp226 is a glycosylation site (C-linked (Man) tryptophan). At Trp229 the chain carries 7'-hydroxytryptophan. Residue Trp229 is glycosylated (C-linked (Man) hydroxytryptophan). The stretch at Ala231–Lys240 is one B-14 repeat. 4-hydroxyproline is present on Pro235. Trp236 is a glycosylation site (C-linked (Man) tryptophan). Trp239 carries the post-translational modification 7'-hydroxytryptophan. C-linked (Man) hydroxytryptophan glycosylation occurs at Trp239. A B-15; approximate repeat occupies Ala241–Lys250. Pro245 carries the post-translational modification 4-hydroxyproline. Trp246 is a glycosylation site (C-linked (Man) tryptophan). Residue Trp249 is modified to 7'-hydroxytryptophan. Residue Trp249 is glycosylated (C-linked (Man) hydroxytryptophan). Residues Ala251–Lys260 form a B-16 repeat. Position 255 is a 4-hydroxyproline (Pro255). Trp256 carries a C-linked (Man) tryptophan glycan. Trp259 is subject to 7'-hydroxytryptophan. A glycan (C-linked (Man) hydroxytryptophan) is linked at Trp259. The A-7 repeat unit spans residues Ala261 to Lys270. 3 positions are modified to 4-hydroxyproline: Pro262, Pro263, and Pro264. Residues Trp266 and Trp269 each carry the 7'-hydroxytryptophan modification. C-linked (Man) hydroxytryptophan glycosylation is found at Trp266 and Trp269. The stretch at Ala271–Lys280 is one B-17 repeat. Pro275 carries the 4-hydroxyproline modification. C-linked (Man) tryptophan glycosylation occurs at Trp276. The residue at position 279 (Trp279) is a 7'-hydroxytryptophan. Trp279 carries C-linked (Man) hydroxytryptophan glycosylation. Residues Ala281–Lys290 form an A-8; approximate repeat. A 4-hydroxyproline mark is found at Pro282, Pro283, and Pro284. 2 positions are modified to 7'-hydroxytryptophan: Trp286 and Trp289. 2 C-linked (Man) hydroxytryptophan glycosylation sites follow: Trp286 and Trp289. Residues Ala291–Lys300 form a B-18 repeat. Position 295 is a 4-hydroxyproline (Pro295). Residue Trp296 is glycosylated (C-linked (Man) tryptophan). 7'-hydroxytryptophan is present on Trp299. C-linked (Man) hydroxytryptophan glycosylation is present at Trp299. The A-9; approximate repeat unit spans residues Ala301–Lys310. Pro302, Pro303, and Pro304 each carry 4-hydroxyproline. Trp306 and Trp309 each carry 7'-hydroxytryptophan. Residues Trp306 and Trp309 are each glycosylated (C-linked (Man) hydroxytryptophan). The stretch at Ala311 to Lys320 is one B-19 repeat. 4-hydroxyproline is present on Pro315. A glycan (C-linked (Man) tryptophan) is linked at Trp316. A 7'-hydroxytryptophan modification is found at Trp319. C-linked (Man) hydroxytryptophan glycosylation occurs at Trp319. One copy of the B-20 repeat lies at Ala321 to Lys330. Pro325 bears the 4-hydroxyproline mark. A glycan (C-linked (Man) tryptophan) is linked at Trp326. Trp329 carries the post-translational modification 7'-hydroxytryptophan. The C-linked (Man) hydroxytryptophan glycan is linked to Trp329. The B-21 repeat unit spans residues Ala331–Lys340. Pro335 bears the 4-hydroxyproline mark. Trp336 carries C-linked (Man) tryptophan glycosylation. Trp339 is modified (7'-hydroxytryptophan). Residue Trp339 is glycosylated (C-linked (Man) hydroxytryptophan). Residues Ala341–Lys350 form a B-22 repeat. Pro345 is modified (4-hydroxyproline). Residue Trp346 is glycosylated (C-linked (Man) tryptophan). Trp349 is subject to 7'-hydroxytryptophan. A glycan (C-linked (Man) hydroxytryptophan) is linked at Trp349. Residues Val351–Lys360 form an A-10; approximate repeat. Residues Pro352, Pro353, and Pro354 each carry the 4-hydroxyproline modification. Trp356, Trp359, Trp366, and Trp369 each carry 7'-hydroxytryptophan. Residues Trp356, Trp359, Trp366, and Trp369 are each glycosylated (C-linked (Man) hydroxytryptophan). Residues Ala361–Lys370 form an A-11; approximate repeat. Residues Ala371–Lys380 form a B-23 repeat. A 4-hydroxyproline modification is found at Pro375. A glycan (C-linked (Man) tryptophan) is linked at Trp376. Residue Trp379 is modified to 7'-hydroxytryptophan. Trp379 carries C-linked (Man) hydroxytryptophan glycosylation. An A-12 repeat occupies Ala381–Lys390. 3 positions are modified to 4-hydroxyproline: Pro382, Pro383, and Pro384. A 7'-hydroxytryptophan mark is found at Trp386 and Trp389. Residues Trp386 and Trp389 are each glycosylated (C-linked (Man) hydroxytryptophan). One copy of the B-24 repeat lies at Ala391–Lys400. Pro395 carries the 4-hydroxyproline modification. Trp396 carries a C-linked (Man) tryptophan glycan. Residue Trp399 is modified to 7'-hydroxytryptophan. A C-linked (Man) hydroxytryptophan glycan is attached at Trp399. Residues Ala401–Lys410 form an A-13 repeat. 4-hydroxyproline is present on residues Pro402, Pro403, and Pro404. Residues Trp406 and Trp409 each carry the 7'-hydroxytryptophan modification. C-linked (Man) hydroxytryptophan glycans are attached at residues Trp406 and Trp409. The stretch at Ala411–Lys420 is one B-25 repeat. Pro415 is modified (4-hydroxyproline). C-linked (Man) tryptophan glycosylation is present at Trp416. Trp419 carries the 7'-hydroxytryptophan modification. Trp419 is a glycosylation site (C-linked (Man) hydroxytryptophan). One copy of the B-26; approximate repeat lies at Ala421–Lys430. Pro425 is subject to 4-hydroxyproline. C-linked (Man) tryptophan glycosylation is present at Trp426. Position 429 is a 7'-hydroxytryptophan (Trp429). Residue Trp429 is glycosylated (C-linked (Man) hydroxytryptophan). The stretch at Ala431 to Arg440 is one B-27; approximate repeat. Position 435 is a 4-hydroxyproline (Pro435). Trp436 is a glycosylation site (C-linked (Man) tryptophan). 7'-hydroxytryptophan is present on Trp439. Trp439 is a glycosylation site (C-linked (Man) hydroxytryptophan). The segment at Gly452–Gly507 is disordered. The span at His453–Gly462 shows a compositional bias: gly residues. In terms of domain architecture, Collagen-like spans Gly459 to Gly510. A compositionally biased stretch (low complexity) spans Lys466–Pro496. Pro497, Pro500, and Pro506 each carry 4-hydroxyproline.

In terms of tissue distribution, produced by the byssal gland.

It localises to the secreted. Its function is as follows. Provides adhesiveness to the mussel's foot. Mussels produce one of the strongest water insoluble glues. The mussel's adhesive is a bundle of threads, called a byssus, formed by a fibrous collagenous core coated with adhesive proteins. This chain is Foot protein 1 variant 1, found in Perna viridis (Asian green mussel).